A 433-amino-acid chain; its full sequence is MSKIAKILAREIIDSRGNPTVEVEAHLEGGFIGLAAAPSGASTGSREALELRDGNPARFLGKGVLKAVEAVNGSIAQALLGKDAKDQQHIDQLMIDLDGTENKSHFGANAILAVSLAVAKAGAASKGMPLYEHIAELHGTPGQFSMPLPMMNIINGGEHADNNIDIQEFMIQPVGAKSFKEAVRMGSEVFHHLAKVLKSKNLSTAVGDEGGYAPNLESNAAALETMKEAVEKAGYVLGKDITFAMDCAASEFYNKETNRYELKGEGKTFTSEEFTHFLENLTQKYPIISIEDGLDESDWEGFKYQTQVLGDKIQLVGDDLFVTNTQILKEGIQKKIANSILIKFNQIGSLTETLAAIKMAQEAGYTAIISHRSGETEDATIADLAVGTSAGQIKTGSMSRSDRVAKYNQLIRIEEALGERALFNGLKEVKGQS.

Q167 provides a ligand contact to (2R)-2-phosphoglycerate. The active-site Proton donor is the E209. Mg(2+) contacts are provided by D246, E291, and D318. (2R)-2-phosphoglycerate contacts are provided by K343, R372, S373, and K394. The Proton acceptor role is filled by K343.

It belongs to the enolase family. In terms of assembly, component of the RNA degradosome, a multiprotein complex involved in RNA processing and mRNA degradation. Mg(2+) is required as a cofactor.

Its subcellular location is the cytoplasm. The protein localises to the secreted. It is found in the cell surface. The catalysed reaction is (2R)-2-phosphoglycerate = phosphoenolpyruvate + H2O. Its pathway is carbohydrate degradation; glycolysis; pyruvate from D-glyceraldehyde 3-phosphate: step 4/5. Functionally, catalyzes the reversible conversion of 2-phosphoglycerate (2-PG) into phosphoenolpyruvate (PEP). It is essential for the degradation of carbohydrates via glycolysis. This chain is Enolase, found in Hamiltonella defensa subsp. Acyrthosiphon pisum (strain 5AT).